We begin with the raw amino-acid sequence, 90 residues long: Small ribosomal subunit protein bS18 (90 aa).

The protein belongs to the bacterial ribosomal protein bS18 family. As to quaternary structure, part of the 30S ribosomal subunit. Forms a tight heterodimer with protein bS6.

Its function is as follows. Binds as a heterodimer with protein bS6 to the central domain of the 16S rRNA, where it helps stabilize the platform of the 30S subunit. The protein is Small ribosomal subunit protein bS18 of Bacteroides fragilis (strain YCH46).